The sequence spans 167 residues: Histidinol dehydrogenase (167 aa).

2 residues coordinate Zn(2+): Gln-109 and His-112.

It belongs to the histidinol dehydrogenase family. Homodimer. Zn(2+) serves as cofactor.

The catalysed reaction is L-histidinol + 2 NAD(+) + H2O = L-histidine + 2 NADH + 3 H(+). It functions in the pathway amino-acid biosynthesis; L-histidine biosynthesis; L-histidine from 5-phospho-alpha-D-ribose 1-diphosphate: step 9/9. Catalyzes the sequential NAD-dependent oxidations of L-histidinol to L-histidinaldehyde and then to L-histidine. This is Histidinol dehydrogenase (hisD) from Salmonella enteritidis.